Consider the following 257-residue polypeptide: Ribonuclease HII (257 aa).

Residues 71-257 enclose the RNase H type-2 domain; the sequence is ELIAGIDEVG…EPIKSMVNFK (187 aa). A divalent metal cation-binding residues include D77, E78, and D169.

This sequence belongs to the RNase HII family. Mn(2+) serves as cofactor. It depends on Mg(2+) as a cofactor.

It is found in the cytoplasm. It carries out the reaction Endonucleolytic cleavage to 5'-phosphomonoester.. Functionally, endonuclease that specifically degrades the RNA of RNA-DNA hybrids. This Lactococcus lactis subsp. cremoris (strain MG1363) protein is Ribonuclease HII (rnhB).